The primary structure comprises 131 residues: Profilin-3 (131 aa).

It belongs to the profilin family. In terms of assembly, occurs in many kinds of cells as a complex with monomeric actin in a 1:1 ratio.

The protein localises to the cytoplasm. It is found in the cytoskeleton. Its function is as follows. Binds to actin and affects the structure of the cytoskeleton. At high concentrations, profilin prevents the polymerization of actin, whereas it enhances it at low concentrations. By binding to PIP2, it inhibits the formation of IP3 and DG. This chain is Profilin-3 (PRO3), found in Triticum aestivum (Wheat).